We begin with the raw amino-acid sequence, 404 residues long: Proteasomal ubiquitin receptor ADRM1-B (404 aa).

One can recognise a Pru domain in the interval 17 to 130 (SSSKYLVEFR…RKVNEYLNNP (114 aa)). Disordered stretches follow at residues 128–149 (NNPP…LSAL), 195–258 (GSGG…TSPT), and 376–404 (FAKA…MSLD). Over residues 195–247 (GSGGPTTSSSSSSSRSQSAAVTPSSTTSSTRTTSAPVAPAAAPATTPSPAVSS) the composition is skewed to low complexity. Polar residues predominate over residues 248 to 258 (NDGASAATSPT). In terms of domain architecture, DEUBAD spans 278 to 390 (TGEGGQQVDL…QSTSSQKERE (113 aa)). Residues 386–395 (QKERESSEKK) are compositionally biased toward basic and acidic residues.

It belongs to the ADRM1 family. As to quaternary structure, component of the 19S proteasome regulatory particle complex. The 26S proteasome consists of a 20S core particle (CP) and two 19S regulatory subunits (RP).

The protein resides in the cytoplasm. Its subcellular location is the nucleus. Component of the 26S proteasome, a multiprotein complex involved in the ATP-dependent degradation of ubiquitinated proteins. This complex plays a key role in the maintenance of protein homeostasis by removing misfolded or damaged proteins, which could impair cellular functions, and by removing proteins whose functions are no longer required. Therefore, the proteasome participates in numerous cellular processes, including cell cycle progression, apoptosis, or DNA damage repair. Within the complex, functions as a proteasomal ubiquitin receptor. This Xenopus laevis (African clawed frog) protein is Proteasomal ubiquitin receptor ADRM1-B (adrm1-b).